We begin with the raw amino-acid sequence, 490 residues long: Transcription factor lin-26 (490 aa).

Disordered stretches follow at residues 96–176 (KYKD…PLHQ), 236–262 (TPEYDDNHHSETISKASSEDLKTEPDS), and 302–326 (ASKPTTPASKRRNTDSNGAPSKKHR). Positions 101-110 (SSSPESPSTT) are PEST. Low complexity predominate over residues 101–120 (SSSPESPSTTASTAAQHTPP). Composition is skewed to polar residues over residues 123–132 (AVSTPTSINT) and 151–176 (NLSTKKVSPSSIEKQLQRTSHNPLHQ). Basic and acidic residues predominate over residues 236–260 (TPEYDDNHHSETISKASSEDLKTEP). Residues 353–381 (YKCALCGKPTTLNSTGSRWNLLRHVIMIH) form a C2H2-type; degenerate zinc finger.

As to expression, expressed in somatic gonads and germline precursors until the 50-cell stage. After the 100-cell stage, expression is seen in differentiating hypodermal and support cells (at protein level).

It localises to the nucleus. Probable transcription factor. Required to specify the fates of hypodermal and neuron-associated support cells. Functions during vulval development, playing a role in vulval precursor cell fate specification. Positively modulates expression of homeobox protein lin-39, perhaps by binding to regulatory regions of the lin-39 gene, acting in the vulval lineage. This is Transcription factor lin-26 from Caenorhabditis elegans.